The primary structure comprises 560 residues: Mitochondria-eating protein (560 aa).

Residues 1 to 294 (MADNLRKLVS…SHSRNHSRSR (294 aa)) form an interaction with YWHAG/14-3-3 protein gamma region. 4 positions are modified to phosphoserine: Ser13, Ser85, Ser156, and Ser159. Coiled-coil stretches lie at residues 118–186 (DRNI…SRHR) and 223–248 (DYEKQLRTLKDEIAVLSAEKSVLQGR). Disordered regions lie at residues 178 to 217 (QAQEESRHRPPEHRSSEKRGSERRRVEPRGADRCGAAQRK) and 243 to 316 (SVLQ…AKLS). Residues 181-209 (EESRHRPPEHRSSEKRGSERRRVEPRGAD) show a composition bias toward basic and acidic residues. The span at 248 to 262 (RSTRSRSPSPASCSR) shows a compositional bias: low complexity. The span at 263–293 (SRSHSHSRSRSHSHSRSGSHSRSHSRNHSRS) shows a compositional bias: basic residues. The span at 300-310 (TAVSGVRSPSP) shows a compositional bias: polar residues. Residues Ser307, Ser309, and Ser531 each carry the phosphoserine modification.

This sequence belongs to the MIEAP family. As to quaternary structure, interacts (via coiled-coil domains) with BNIP3L (via BH3 domain). Interacts (via coiled-coil domains) with BNIP3 (via BH3 domain). Interacts with YWHAG/14-3-3 protein gamma; a protein that also plays a role in MALM.

It is found in the cytoplasm. It localises to the cytosol. Its subcellular location is the mitochondrion outer membrane. The protein resides in the mitochondrion matrix. Its function is as follows. Key regulator of mitochondrial quality that mediates the repairing or degradation of unhealthy mitochondria in response to mitochondrial damage. Mediator of mitochondrial protein catabolic process (also named MALM) by mediating the degradation of damaged proteins inside mitochondria by promoting the accumulation in the mitochondrial matrix of hydrolases that are characteristic of the lysosomal lumen. Also involved in mitochondrion degradation of damaged mitochondria by promoting the formation of vacuole-like structures (named MIV), which engulf and degrade unhealthy mitochondria by accumulating lysosomes. The physical interaction of SPATA18/MIEAP, BNIP3 and BNIP3L/NIX at the mitochondrial outer membrane regulates the opening of a pore in the mitochondrial double membrane in order to mediate the translocation of lysosomal proteins from the cytoplasm to the mitochondrial matrix. Binds cardiolipin. May form molecular condensates (non-membrane-bounded organelles) within mitochondria that compartmentalize and promote cardiolipin metabolism. This is Mitochondria-eating protein (SPATA18) from Sus scrofa (Pig).